Reading from the N-terminus, the 235-residue chain is Small ribosomal subunit protein uS2c (235 aa).

It belongs to the universal ribosomal protein uS2 family.

The protein resides in the plastid. It localises to the chloroplast. The protein is Small ribosomal subunit protein uS2c (rps2) of Huperzia lucidula (Shining clubmoss).